We begin with the raw amino-acid sequence, 474 residues long: Glycogen synthase (474 aa).

ADP-alpha-D-glucose is bound at residue Lys-15.

Belongs to the glycosyltransferase 1 family. Bacterial/plant glycogen synthase subfamily.

The catalysed reaction is [(1-&gt;4)-alpha-D-glucosyl](n) + ADP-alpha-D-glucose = [(1-&gt;4)-alpha-D-glucosyl](n+1) + ADP + H(+). The protein operates within glycan biosynthesis; glycogen biosynthesis. In terms of biological role, synthesizes alpha-1,4-glucan chains using ADP-glucose. The sequence is that of Glycogen synthase from Chlamydia trachomatis serovar D (strain ATCC VR-885 / DSM 19411 / UW-3/Cx).